Reading from the N-terminus, the 216-residue chain is Endo-1,4-beta-xylanase 1 (216 aa).

Positions 1-19 (MFLTSVVSLVVGAISCVSA) are cleaved as a signal peptide. One can recognise a GH11 domain in the interval 29–216 (QMTPRNSCYG…SSGSASITVS (188 aa)). The active-site Nucleophile is the glutamate 112. Catalysis depends on glutamate 203, which acts as the Proton donor.

It belongs to the glycosyl hydrolase 11 (cellulase G) family.

The protein resides in the secreted. The enzyme catalyses Endohydrolysis of (1-&gt;4)-beta-D-xylosidic linkages in xylans.. Its pathway is glycan degradation; xylan degradation. Endo-1,4-beta-xylanase involved in the hydrolysis of xylan, a major structural heterogeneous polysaccharide found in plant biomass representing the second most abundant polysaccharide in the biosphere, after cellulose. The sequence is that of Endo-1,4-beta-xylanase 1 (xyl1) from Claviceps purpurea (Ergot fungus).